We begin with the raw amino-acid sequence, 316 residues long: Geminin coiled-coil domain-containing protein 1 (316 aa).

Positions 82–117 (QISANKQLQDTLLQKEEELSRLHEENNKLKEFLNSA) form a coiled coil. Polar residues-rich tracts occupy residues 134 to 155 (GQSS…STPG) and 207 to 234 (MSLQ…QAAT). Disordered regions lie at residues 134-160 (GQSS…KAKR) and 207-269 (MSLQ…DVAP). T153 carries the post-translational modification Phosphothreonine; by cdk2. A compositionally biased stretch (low complexity) spans 235–252 (SCSLSPSQCSSASLPESE). Residues 253-262 (TASPLSSPTY) show a composition bias toward polar residues.

Belongs to the GEMC1 family. Interacts with topbp1. Interacts with Cdc45l and the kinase cdk2-cyclin-E (the interaction is direct). In terms of processing, highly phosphorylated by cdk2; stimulates initiation of DNA replication. Expressed in most tissues. Enriched in proliferating cells from skin and gut.

The protein localises to the nucleus. Functionally, regulator of DNA replication. Promotes initiation of chromosomal DNA replication by mediating topbp1- and cdk2-dependent recruitment of cdc45l onto replication origins. The protein is Geminin coiled-coil domain-containing protein 1 (gmnc) of Xenopus laevis (African clawed frog).